We begin with the raw amino-acid sequence, 556 residues long: Oxygen-dependent choline dehydrogenase (556 aa).

Position 4–33 (4–33 (DYIIIGAGSAGNVLATRLTEDPNTTVLLLE)) interacts with FAD. His-473 functions as the Proton acceptor in the catalytic mechanism.

Belongs to the GMC oxidoreductase family. Requires FAD as cofactor.

It localises to the cell membrane. The enzyme catalyses choline + A = betaine aldehyde + AH2. It catalyses the reaction betaine aldehyde + NAD(+) + H2O = glycine betaine + NADH + 2 H(+). The protein operates within amine and polyamine biosynthesis; betaine biosynthesis via choline pathway; betaine aldehyde from choline (cytochrome c reductase route): step 1/1. Involved in the biosynthesis of the osmoprotectant glycine betaine. Catalyzes the oxidation of choline to betaine aldehyde and betaine aldehyde to glycine betaine at the same rate. The polypeptide is Oxygen-dependent choline dehydrogenase (Escherichia coli O6:H1 (strain CFT073 / ATCC 700928 / UPEC)).